A 223-amino-acid chain; its full sequence is MSEQNELNTLKSRFRGYFPVVIDVETAGFNAKTDALLEICAVTLQMDEDGWLKPASTIHFHVAPFEGAVLHKEALEFNGIRDPFSPLRGAVSEETALKEIYKQIRKEQKTADCSRAIMVAHNANFDHSFVMEASERARLKRNPFHPFATFDTAALSGLAFGQTVLAKACKTAGIAFDNKEAHSALYDTERTAELFCEIVNKWKKLGGWPLFESQTEEIDKSQN.

Residues 20 to 195 enclose the Exonuclease domain; sequence VVIDVETAGF…YDTERTAELF (176 aa). Mg(2+)-binding residues include D23, E25, H182, and D187. H182 (proton donor/acceptor) is an active-site residue.

The protein belongs to the RNase T family. As to quaternary structure, homodimer. It depends on Mg(2+) as a cofactor.

Trims short 3' overhangs of a variety of RNA species, leaving a one or two nucleotide 3' overhang. Responsible for the end-turnover of tRNA: specifically removes the terminal AMP residue from uncharged tRNA (tRNA-C-C-A). Also appears to be involved in tRNA biosynthesis. This chain is Ribonuclease T, found in Photobacterium profundum (strain SS9).